The chain runs to 510 residues: 2,3-bisphosphoglycerate-independent phosphoglycerate mutase (510 aa).

Residues Asp13 and Ser63 each contribute to the Mn(2+) site. The Phosphoserine intermediate role is filled by Ser63. Substrate is bound by residues His124, 154-155 (RD), Arg186, Arg192, 262-265 (RADR), and Lys334. 5 residues coordinate Mn(2+): Asp401, His405, Asp442, His443, and His461.

It belongs to the BPG-independent phosphoglycerate mutase family. In terms of assembly, monomer. Mn(2+) serves as cofactor.

It carries out the reaction (2R)-2-phosphoglycerate = (2R)-3-phosphoglycerate. It functions in the pathway carbohydrate degradation; glycolysis; pyruvate from D-glyceraldehyde 3-phosphate: step 3/5. Catalyzes the interconversion of 2-phosphoglycerate and 3-phosphoglycerate. The polypeptide is 2,3-bisphosphoglycerate-independent phosphoglycerate mutase (Vibrio atlanticus (strain LGP32) (Vibrio splendidus (strain Mel32))).